Consider the following 209-residue polypeptide: Tektin bundle-interacting protein 1 (209 aa).

As to quaternary structure, microtubule inner protein component of sperm flagellar doublet microtubules.

It is found in the cytoplasm. The protein localises to the cytoskeleton. It localises to the cilium axoneme. The protein resides in the flagellum axoneme. In terms of biological role, microtubule inner protein (MIP) part of the dynein-decorated doublet microtubules (DMTs) in cilia axoneme, which is required for motile cilia beating. Located at the center of the tektin bundle where may function to recruit tektins or stabilize the bundle. This is Tektin bundle-interacting protein 1 from Homo sapiens (Human).